Consider the following 396-residue polypeptide: MAKAKFERNKPHVNVGTIGHVDHGKTTLTAAIATVAAKTFGGEAKDYAAIDSAPEEKARGITINTSHIEYDTADRHYAHVDCPGHADYVKNMITGAAQMDGAILVVSATDGPMPQTREHILLSRQVGVPYIMVFMNKCDMVDDEELLELVEMEVRELLSDYDFPGDDTPIIKGSALEALNGKDGKYGEPAVIELLNTLDTYIPEPERDIDKPFLMPIEDVFSISGRGTVVTGRVESGIVKVGDEIEIVGIRDTQKTTCTGVEMFRKLLDEGRAGENCGVLLRGTKREDVQRGQVLAKPGSITPHTKFDAEVYVLSKEEGGRHTPFLNGYRPQFYFRTTDVTGAISLQEGTEMVMPGDNVEMSVELIHPIAMDKGLRFAIREGGRTVGAGVVANVKD.

The tr-type G domain occupies 10–206 (KPHVNVGTIG…TLDTYIPEPE (197 aa)). The tract at residues 19 to 26 (GHVDHGKT) is G1. 19 to 26 (GHVDHGKT) is a binding site for GTP. Residue Thr26 coordinates Mg(2+). The tract at residues 60–64 (GITIN) is G2. Residues 81 to 84 (DCPG) form a G3 region. GTP contacts are provided by residues 81 to 85 (DCPGH) and 136 to 139 (NKCD). Residues 136-139 (NKCD) form a G4 region. The G5 stretch occupies residues 174-176 (SAL).

It belongs to the TRAFAC class translation factor GTPase superfamily. Classic translation factor GTPase family. EF-Tu/EF-1A subfamily. As to quaternary structure, monomer.

The protein resides in the cytoplasm. It carries out the reaction GTP + H2O = GDP + phosphate + H(+). GTP hydrolase that promotes the GTP-dependent binding of aminoacyl-tRNA to the A-site of ribosomes during protein biosynthesis. This Psychrobacter sp. (strain PRwf-1) protein is Elongation factor Tu 2.